Here is a 95-residue protein sequence, read N- to C-terminus: Protein IDA-LIKE 2 (95 aa).

The first 35 residues, 1–35 (MSSRNQRSRITSSFFVSFFTRTILLLLILLLGFCN), serve as a signal peptide directing secretion. The interval 75 to 95 (ASGPSRKHNDIGLLSWHRSSP) is disordered.

In terms of tissue distribution, expressed in leaves, buds, flowers, seedlings and seeds. Detected at the base of pedicel, in the floral and funicule abscission zones and in vascular tissues.

The protein localises to the secreted. Its subcellular location is the extracellular space. In terms of biological role, may be involved in floral abscission. This chain is Protein IDA-LIKE 2 (IDL2), found in Arabidopsis thaliana (Mouse-ear cress).